A 353-amino-acid chain; its full sequence is Quinolinate synthase (353 aa).

Residues His49 and Ser70 each contribute to the iminosuccinate site. Residue Cys115 participates in [4Fe-4S] cluster binding. Iminosuccinate contacts are provided by residues 141-143 (YAN) and Ser158. Residue Cys202 coordinates [4Fe-4S] cluster. Iminosuccinate is bound by residues 228-230 (HPE) and Thr245. Residue Cys299 participates in [4Fe-4S] cluster binding.

This sequence belongs to the quinolinate synthase family. Type 1 subfamily. [4Fe-4S] cluster is required as a cofactor.

Its subcellular location is the cytoplasm. The enzyme catalyses iminosuccinate + dihydroxyacetone phosphate = quinolinate + phosphate + 2 H2O + H(+). Its pathway is cofactor biosynthesis; NAD(+) biosynthesis; quinolinate from iminoaspartate: step 1/1. Catalyzes the condensation of iminoaspartate with dihydroxyacetone phosphate to form quinolinate. This is Quinolinate synthase from Marinobacter nauticus (strain ATCC 700491 / DSM 11845 / VT8) (Marinobacter aquaeolei).